Reading from the N-terminus, the 311-residue chain is Glutaminase (311 aa).

The substrate site is built by S66, N116, E162, N169, Y193, Y245, and V263.

The protein belongs to the glutaminase family. Homotetramer.

It carries out the reaction L-glutamine + H2O = L-glutamate + NH4(+). The protein is Glutaminase of Rhodopseudomonas palustris (strain HaA2).